Reading from the N-terminus, the 398-residue chain is Elongation factor Tu (398 aa).

A tr-type G domain is found at 10-207 (KIHLNVGTIG…ILDKNIPVPN (198 aa)). Residues 19-26 (GHVDHGKT) are G1. GTP is bound at residue 19–26 (GHVDHGKT). Threonine 26 provides a ligand contact to Mg(2+). Residues 60-64 (GITIS) form a G2 region. Positions 81 to 84 (DCPG) are G3. GTP contacts are provided by residues 81–85 (DCPGH) and 136–139 (NKAD). Positions 136–139 (NKAD) are G4. The segment at 174–176 (SAL) is G5.

Belongs to the TRAFAC class translation factor GTPase superfamily. Classic translation factor GTPase family. EF-Tu/EF-1A subfamily. In terms of assembly, monomer.

It is found in the cytoplasm. It catalyses the reaction GTP + H2O = GDP + phosphate + H(+). Functionally, GTP hydrolase that promotes the GTP-dependent binding of aminoacyl-tRNA to the A-site of ribosomes during protein biosynthesis. The protein is Elongation factor Tu of Carsonella ruddii (strain PV).